The following is a 49-amino-acid chain: Osteocalcin (49 aa).

Pyrrolidone carboxylic acid is present on Gln-1. The Gla domain occupies Gln-1–Gly-47. Pro-9 is modified (4-hydroxyproline). Ca(2+)-binding residues include Glu-17, Glu-21, Glu-24, and Asp-30. Residues Glu-17, Glu-21, and Glu-24 each carry the 4-carboxyglutamate modification. Cys-23 and Cys-29 are joined by a disulfide.

It belongs to the osteocalcin/matrix Gla protein family. Gamma-carboxyglutamate residues are formed by vitamin K dependent carboxylation by GGCX. These residues are essential for the binding of calcium. Decarboxylation promotes the hormone activity.

Its subcellular location is the secreted. Its function is as follows. The carboxylated form is one of the main organic components of the bone matrix, which constitutes 1-2% of the total bone protein: it acts as a negative regulator of bone formation and is required to limit bone formation without impairing bone resorption or mineralization. The carboxylated form binds strongly to apatite and calcium. In terms of biological role, the uncarboxylated form acts as a hormone secreted by osteoblasts, which regulates different cellular processes, such as energy metabolism, male fertility and brain development. Regulates of energy metabolism by acting as a hormone favoring pancreatic beta-cell proliferation, insulin secretion and sensitivity and energy expenditure. Uncarboxylated osteocalcin hormone also promotes testosterone production in the testes: acts as a ligand for G protein-coupled receptor GPRC6A at the surface of Leydig cells, initiating a signaling response that promotes the expression of enzymes required for testosterone synthesis in a CREB-dependent manner. Also acts as a regulator of brain development: osteocalcin hormone crosses the blood-brain barrier and acts as a ligand for GPR158 on neurons, initiating a signaling response that prevents neuronal apoptosis in the hippocampus, favors the synthesis of all monoamine neurotransmitters and inhibits that of gamma-aminobutyric acid (GABA). Osteocalcin also crosses the placenta during pregnancy and maternal osteocalcin is required for fetal brain development. The chain is Osteocalcin (BGLAP) from Oryctolagus cuniculus (Rabbit).